A 427-amino-acid polypeptide reads, in one-letter code: Indole diterpene prenyltransferase idtF (427 aa).

6 residues coordinate substrate: arginine 97, lysine 195, arginine 264, lysine 266, tyrosine 268, and tyrosine 352.

It belongs to the tryptophan dimethylallyltransferase family.

The protein operates within secondary metabolite biosynthesis. Indole diterpene prenyltransferase; part of the gene cluster that mediates the biosynthesis of paspalitrems, indole-diterpene (IDT) mycotoxins that are potent tremorgens in mammals. The geranylgeranyl diphosphate (GGPP) synthase idtG is proposed to catalyze the first step in IDT biosynthesis via catalysis of a series of iterative condensations of isopentenyl diphosphate (IPP) with dimethylallyl diphosphate (DMAPP), geranyl diphosphate (GPP), and farnesyl diphosphate (FPP), to form GGPP. Condensation of indole-3-glycerol phosphate with GGPP by the prenyltransferase idtC then forms 3-geranylgeranylindole (3-GGI). Epoxidation of the two terminal alkenes of the geranylgeranyl moiety by the FAD-dependent monooxygenase idtM, and cyclization by the terpene cyclase idtB then leads to the production of paspaline. The cytochrome P450 monooxygenase idtP then catalyzes oxidative elimination of the pendant methyl group at C-12 of paspaline and generates the C-10 ketone to yield 13-desoxypaxilline. The cytochrome P450 monooxygenase idtQ may catalyze the C-13 oxidation of 13-desoxypaxilline to afford paxilline. Considering that both paspalicine and paxilline were detected in C.paspali, idtQ also catalyzes the formation of paspalinine from 13-desoxypaxilline via paspalicine as an intermediate. Finally, the alpha-prenyltransferase idtF prenylates paspalinine at the C-20 or the C-21 positions to yield paspalitrems A and C, respectively. The hydroxylation of paspalitrem A at C-32 by a still unknown oxidase affords paspalitrem B. This Claviceps paspali (Rye ergot fungus) protein is Indole diterpene prenyltransferase idtF.